The following is a 380-amino-acid chain: Alkaline protease (380 aa).

A signal peptide spans 1–27 (MKKPLGKIVASTALLISVAFSSSIASA). A propeptide spanning residues 28–111 (AEEAKEKYLI…IEEDAEVTTM (84 aa)) is cleaved from the precursor. Positions 34-111 (KYLIGFNEQE…IEEDAEVTTM (78 aa)) constitute an Inhibitor I9 domain. Gln113 lines the Ca(2+) pocket. Residues 116–379 (PWGISRVQAP…SGLVNAEAAT (264 aa)) form the Peptidase S8 domain. Residue Asp143 is the Charge relay system of the active site. A Ca(2+)-binding site is contributed by Asp151. The active-site Charge relay system is His173. 7 residues coordinate Ca(2+): Leu184, Asn186, Ile188, Val190, Ala274, Tyr276, and Ala279. The Charge relay system role is filled by Ser326.

It belongs to the peptidase S8 family. Requires Ca(2+) as cofactor.

Its subcellular location is the secreted. The polypeptide is Alkaline protease (Shouchella clausii (Alkalihalobacillus clausii)).